A 338-amino-acid polypeptide reads, in one-letter code: Elongation factor Ts, mitochondrial (338 aa).

Residues 1 to 55 (MSLLRSLRLCLVARTGSCPLSALGPGPLLPSLQAGLPLLQSPQQWHTFHSGSWLS) constitute a mitochondrion transit peptide. 3 positions are modified to N6-succinyllysine: K89, K146, and K205. S283 is modified (phosphoserine).

Belongs to the EF-Ts family.

The protein resides in the mitochondrion. Its function is as follows. Associates with the EF-Tu.GDP complex and induces the exchange of GDP to GTP. It remains bound to the aminoacyl-tRNA.EF-Tu.GTP complex up to the GTP hydrolysis stage on the ribosome. This Bos taurus (Bovine) protein is Elongation factor Ts, mitochondrial.